A 769-amino-acid chain; its full sequence is Calcium up-regulated protein F (769 aa).

Positions 1–21 (MINIKDISKSSNQSEEKSLKG) are disordered. 2 Ricin B-type lectin domains span residues 25 to 145 (KTKY…WTTF) and 116 to 249 (QGNG…WGIN).

It belongs to the cup family.

It localises to the cytoplasm. It is found in the membrane. May play an important role in stabilizing and/or regulating the cell membrane during Ca(2+) stress or certain stages of development. This chain is Calcium up-regulated protein F (cupF), found in Dictyostelium discoideum (Social amoeba).